We begin with the raw amino-acid sequence, 265 residues long: Hydroxyethylthiazole kinase 2 (265 aa).

Residue M39 participates in substrate binding. ATP contacts are provided by K115 and T168. G195 contributes to the substrate binding site.

The protein belongs to the Thz kinase family. Mg(2+) is required as a cofactor.

It catalyses the reaction 5-(2-hydroxyethyl)-4-methylthiazole + ATP = 4-methyl-5-(2-phosphooxyethyl)-thiazole + ADP + H(+). It functions in the pathway cofactor biosynthesis; thiamine diphosphate biosynthesis; 4-methyl-5-(2-phosphoethyl)-thiazole from 5-(2-hydroxyethyl)-4-methylthiazole: step 1/1. Functionally, catalyzes the phosphorylation of the hydroxyl group of 4-methyl-5-beta-hydroxyethylthiazole (THZ). The protein is Hydroxyethylthiazole kinase 2 of Clostridium botulinum (strain Langeland / NCTC 10281 / Type F).